A 349-amino-acid polypeptide reads, in one-letter code: Hydroxymethylglutaryl-CoA synthase (349 aa).

(3S)-3-hydroxy-3-methylglutaryl-CoA-binding residues include aspartate 30 and alanine 31. Catalysis depends on glutamate 82, which acts as the Proton donor/acceptor. 2 residues coordinate (3S)-3-hydroxy-3-methylglutaryl-CoA: cysteine 114 and threonine 155. Residue cysteine 114 is the Acyl-thioester intermediate of the active site. Arginine 203 provides a ligand contact to CoA. Threonine 205 and histidine 238 together coordinate (3S)-3-hydroxy-3-methylglutaryl-CoA. Histidine 238 (proton donor/acceptor) is an active-site residue. A CoA-binding site is contributed by lysine 243. Positions 270 and 300 each coordinate (3S)-3-hydroxy-3-methylglutaryl-CoA.

The protein belongs to the thiolase-like superfamily. Archaeal HMG-CoA synthase family. As to quaternary structure, interacts with acetoacetyl-CoA thiolase that catalyzes the precedent step in the pathway and with a DUF35 protein. The acetoacetyl-CoA thiolase/HMG-CoA synthase complex channels the intermediate via a fused CoA-binding site, which allows for efficient coupling of the endergonic thiolase reaction with the exergonic HMGCS reaction.

It carries out the reaction acetoacetyl-CoA + acetyl-CoA + H2O = (3S)-3-hydroxy-3-methylglutaryl-CoA + CoA + H(+). It participates in metabolic intermediate biosynthesis; (R)-mevalonate biosynthesis; (R)-mevalonate from acetyl-CoA: step 2/3. Its function is as follows. Catalyzes the condensation of acetyl-CoA with acetoacetyl-CoA to form 3-hydroxy-3-methylglutaryl-CoA (HMG-CoA). Functions in the mevalonate (MVA) pathway leading to isopentenyl diphosphate (IPP), a key precursor for the biosynthesis of isoprenoid compounds that are building blocks of archaeal membrane lipids. The sequence is that of Hydroxymethylglutaryl-CoA synthase from Methanococcus maripaludis (strain C6 / ATCC BAA-1332).